A 128-amino-acid polypeptide reads, in one-letter code: Small ribosomal subunit protein eS6 (128 aa).

Belongs to the eukaryotic ribosomal protein eS6 family.

The sequence is that of Small ribosomal subunit protein eS6 from Methanobrevibacter smithii (strain ATCC 35061 / DSM 861 / OCM 144 / PS).